A 366-amino-acid chain; its full sequence is C-X-C chemokine receptor type 3 (366 aa).

Residues methionine 1–proline 55 lie on the Extracellular side of the membrane. Asparagine 22 is a glycosylation site (N-linked (GlcNAc...) asparagine). Sulfotyrosine is present on residues tyrosine 25 and tyrosine 27. Residue asparagine 30 is glycosylated (N-linked (GlcNAc...) asparagine). The helical transmembrane segment at valine 56–leucine 76 threads the bilayer. The Cytoplasmic segment spans residues leucine 77–threonine 88. Residues phenylalanine 89–valine 109 traverse the membrane as a helical segment. The Extracellular portion of the chain corresponds to aspartate 110–valine 124. Residues cysteine 122 and cysteine 201 are joined by a disulfide bond. The helical transmembrane segment at alanine 125 to phenylalanine 145 threads the bilayer. Over aspartate 146 to alanine 167 the chain is Cytoplasmic. A helical transmembrane segment spans residues leucine 168–leucine 188. At serine 189 to glycine 221 the chain is on the extracellular side. A glycan (N-linked (GlcNAc...) asparagine) is linked at asparagine 197. The helical transmembrane segment at phenylalanine 222–valine 242 threads the bilayer. The Cytoplasmic segment spans residues serine 243–leucine 254. A helical transmembrane segment spans residues valine 255 to valine 275. At aspartate 276–serine 299 the chain is on the extracellular side. Residues valine 300–glycine 320 form a helical membrane-spanning segment. The Cytoplasmic segment spans residues valine 321–leucine 366. A disordered region spans residues glutamine 339–leucine 366. Residues tryptophan 355–leucine 366 show a composition bias toward polar residues.

This sequence belongs to the G-protein coupled receptor 1 family. In terms of assembly, homomer. Forms heteromers with ACKR4. Interacts with PF4/CXCL4. In terms of processing, sulfation on Tyr-25 and Tyr-27 is essential for CXCL10 binding. N-glycosylated.

Its subcellular location is the cell membrane. Its function is as follows. Receptor for the C-X-C chemokine CXCL9, CXCL10 and CXCL11 and mediates the proliferation, survival and angiogenic activity of mesangial cells through a heterotrimeric G-protein signaling pathway. Probably promotes cell chemotaxis response. Binds to CCL21. Upon activation by PF4, induces activated T-lymphocytes migration mediated via downstream Ras/extracellular signal-regulated kinase (ERK) signaling. The chain is C-X-C chemokine receptor type 3 (CXCR3) from Capra hircus (Goat).